We begin with the raw amino-acid sequence, 872 residues long: C-mannosyltransferase dpy-19 homolog (872 aa).

9 helical membrane-spanning segments follow: residues 4 to 24 (PNLY…FLYV), 126 to 146 (FVWL…TLLS), 149 to 169 (IFGG…VAKI), 179 to 199 (FAFP…GRII), 211 to 231 (IFAM…STFI), 257 to 277 (VLDY…MSHG), 279 to 299 (SQLL…ITMV), 326 to 346 (FLML…ELFN), and 399 to 419 (VKTM…AMFF). A coiled-coil region spans residues 508 to 535 (KRLRAQINRNSVKQRKERAQETKEAATD). The interval 514-620 (INRNSVKQRK…RSSSRRSSVV (107 aa)) is disordered. Residues 524-533 (ERAQETKEAA) are compositionally biased toward basic and acidic residues. Acidic residues predominate over residues 541-551 (TEEEDKDPEAE). 2 helical membrane passes run 627–647 (ILNM…LIGL) and 678–698 (NIFW…PGMV).

This sequence belongs to the dpy-19 family.

It is found in the membrane. In terms of biological role, probable C-mannosyltransferase that mediates C-mannosylation of tryptophan residues on target proteins. The chain is C-mannosyltransferase dpy-19 homolog from Drosophila melanogaster (Fruit fly).